A 667-amino-acid chain; its full sequence is Acetolactate synthase 1, chloroplastic (667 aa).

The span at 1 to 35 (MAAAAPSPSSSAFSKTLSPSSSTSSTLLPRSTFPF) shows a compositional bias: low complexity. Residues 1–45 (MAAAAPSPSSSAFSKTLSPSSSTSSTLLPRSTFPFPHHPHKTTPP) are disordered. A chloroplast-targeting transit peptide spans 1 to 94 (MAAAAPSPSS…VSRFAPDEPR (94 aa)). A thiamine diphosphate-binding site is contributed by E141. A disulfide bond links C161 and C307. FAD is bound by residues R243, 349 to 370 (HGTVYANYAVDSSDLLLAFGVR), and 392 to 411 (DIDSAEIGKNKQPHVSICAD). Residues 484–564 (QHQMWAAQYY…VKIMLLNNQH (81 aa)) are thiamine pyrophosphate binding. The Mg(2+) site is built by D535 and N562.

It belongs to the TPP enzyme family. Mg(2+) serves as cofactor. The cofactor is thiamine diphosphate.

It is found in the plastid. The protein resides in the chloroplast. The enzyme catalyses 2 pyruvate + H(+) = (2S)-2-acetolactate + CO2. It functions in the pathway amino-acid biosynthesis; L-isoleucine biosynthesis; L-isoleucine from 2-oxobutanoate: step 1/4. It participates in amino-acid biosynthesis; L-valine biosynthesis; L-valine from pyruvate: step 1/4. This is Acetolactate synthase 1, chloroplastic (ALS SURA) from Nicotiana tabacum (Common tobacco).